The chain runs to 273 residues: Phosphatidylglycerol--prolipoprotein diacylglyceryl transferase (273 aa).

4 helical membrane-spanning segments follow: residues 18 to 38, 47 to 67, 89 to 109, and 116 to 136; these read IPVR…YVVG, LPED…IICA, IWNG…TAYI, and VSFL…QIIG. Residue R137 coordinates a 1,2-diacyl-sn-glycero-3-phospho-(1'-sn-glycerol). 3 helical membrane passes run 178–198, 207–227, and 238–258; these read VHPT…ILLI, GEIF…IEGM, and LRSA…AIIY.

Belongs to the Lgt family.

It localises to the cell membrane. It catalyses the reaction L-cysteinyl-[prolipoprotein] + a 1,2-diacyl-sn-glycero-3-phospho-(1'-sn-glycerol) = an S-1,2-diacyl-sn-glyceryl-L-cysteinyl-[prolipoprotein] + sn-glycerol 1-phosphate + H(+). It participates in protein modification; lipoprotein biosynthesis (diacylglyceryl transfer). Its function is as follows. Catalyzes the transfer of the diacylglyceryl group from phosphatidylglycerol to the sulfhydryl group of the N-terminal cysteine of a prolipoprotein, the first step in the formation of mature lipoproteins. The chain is Phosphatidylglycerol--prolipoprotein diacylglyceryl transferase from Lysinibacillus sphaericus (strain C3-41).